A 542-amino-acid chain; its full sequence is Glucans biosynthesis protein G (542 aa).

An N-terminal signal peptide occupies residues 1–34 (MVSLLRCPSSKPYSSLICSLTLGAVVALSGVAYA).

Belongs to the OpgD/OpgG family.

The protein resides in the periplasm. Its pathway is glycan metabolism; osmoregulated periplasmic glucan (OPG) biosynthesis. Its function is as follows. Involved in the biosynthesis of osmoregulated periplasmic glucans (OPGs). This is Glucans biosynthesis protein G from Shewanella baltica (strain OS223).